A 227-amino-acid polypeptide reads, in one-letter code: Ribosomal RNA large subunit methyltransferase E (227 aa).

The S-adenosyl-L-methionine site is built by G78, W80, D103, D119, and D143. The active-site Proton acceptor is K183.

The protein belongs to the class I-like SAM-binding methyltransferase superfamily. RNA methyltransferase RlmE family.

It is found in the cytoplasm. It catalyses the reaction uridine(2552) in 23S rRNA + S-adenosyl-L-methionine = 2'-O-methyluridine(2552) in 23S rRNA + S-adenosyl-L-homocysteine + H(+). Its function is as follows. Specifically methylates the uridine in position 2552 of 23S rRNA at the 2'-O position of the ribose in the fully assembled 50S ribosomal subunit. The protein is Ribosomal RNA large subunit methyltransferase E of Rickettsia canadensis (strain McKiel).